We begin with the raw amino-acid sequence, 110 residues long: uncharacterized protein (110 aa).

The protein to M.jannaschii MJ0123 and A.aeolicus AA15.

This is an uncharacterized protein from Methanocaldococcus jannaschii (strain ATCC 43067 / DSM 2661 / JAL-1 / JCM 10045 / NBRC 100440) (Methanococcus jannaschii).